We begin with the raw amino-acid sequence, 251 residues long: Probable transcriptional regulatory protein cu0933 (251 aa).

The interval 56-79 (AKKSSVPNDNIERARKRGSGEEAG) is disordered.

This sequence belongs to the TACO1 family.

It localises to the cytoplasm. This is Probable transcriptional regulatory protein cu0933 from Corynebacterium urealyticum (strain ATCC 43042 / DSM 7109).